A 77-amino-acid polypeptide reads, in one-letter code: Exodeoxyribonuclease 7 small subunit (77 aa).

Belongs to the XseB family. Heterooligomer composed of large and small subunits.

The protein resides in the cytoplasm. It carries out the reaction Exonucleolytic cleavage in either 5'- to 3'- or 3'- to 5'-direction to yield nucleoside 5'-phosphates.. Bidirectionally degrades single-stranded DNA into large acid-insoluble oligonucleotides, which are then degraded further into small acid-soluble oligonucleotides. This chain is Exodeoxyribonuclease 7 small subunit, found in Carboxydothermus hydrogenoformans (strain ATCC BAA-161 / DSM 6008 / Z-2901).